Reading from the N-terminus, the 485-residue chain is Glutathione gamma-glutamylcysteinyltransferase 1 (485 aa).

Residues 1–221 enclose the Peptidase C83 domain; that stretch reads MAMASLYRRS…GFMLISRPHR (221 aa). Catalysis depends on residues cysteine 56, histidine 162, and aspartate 180.

It belongs to the phytochelatin synthase family. In terms of tissue distribution, expressed in roots and shoots.

It carries out the reaction [Glu(-Cys)](n)-Gly + glutathione + H(+) = [Glu(-Cys)](n+1)-Gly + glycine. Its activity is regulated as follows. Requires cadmium for activity. Also activated in vitro or in heterologous system by Ag(+), Hg(+), Zn(2+), Cu(2+), Fe(2+) or Fe(3+) ions, but not by Co(2+) or Ni(2+) ions. Involved in the synthesis of phytochelatins (PC) and homophytochelatins (hPC), the heavy-metal-binding peptides of plants. Also involved in glutathione-conjugates degradation. This Arabidopsis thaliana (Mouse-ear cress) protein is Glutathione gamma-glutamylcysteinyltransferase 1 (PCS1).